The following is a 185-amino-acid chain: UPF0200 protein TK1334 (185 aa).

Residue 7–14 coordinates ATP; that stretch reads GMPGSGKS.

Belongs to the UPF0200 family.

The sequence is that of UPF0200 protein TK1334 from Thermococcus kodakarensis (strain ATCC BAA-918 / JCM 12380 / KOD1) (Pyrococcus kodakaraensis (strain KOD1)).